A 197-amino-acid polypeptide reads, in one-letter code: Double homeobox protein 5 (197 aa).

2 DNA-binding regions (homeobox) span residues 46 to 105 and 121 to 180; these read GRRM…LRQH and GRRK…RGQS. The interval 101-127 is disordered; sequence QLRQHRRQSRPWPGRRDPQKGRRKRTA.

Belongs to the paired homeobox family. Expressed in hepatoma Hep3B cells.

The protein resides in the nucleus. This Homo sapiens (Human) protein is Double homeobox protein 5 (DUX5).